The chain runs to 283 residues: Transmembrane protein 119 (283 aa).

An N-terminal signal peptide occupies residues 1–25; that stretch reads MVSAAAPSLLILLLLLLGSVPATDA. Topologically, residues 26–96 are extracellular; it reads RSVPLKATFL…IVDFFRQYVM (71 aa). Ser-41 is a glycosylation site (O-linked (Xyl...) (chondroitin sulfate) serine). Positions 43–52 are enriched in low complexity; it reads EAEGSSASSP. Positions 43-76 are disordered; sequence EAEGSSASSPSLPPPWTPALSPTSMGPQPITLGG. Residues 97–117 form a helical membrane-spanning segment; that stretch reads LIAVVGSLAFLLMFIVCAAVI. Residues 118-283 lie on the Cytoplasmic side of the membrane; sequence TRQKQKASAY…CACSSVHPSV (166 aa). Disordered stretches follow at residues 136–168 and 183–283; these read KYVD…ALDS and LKSP…HPSV. Basic and acidic residues-rich tracts occupy residues 153–164 and 198–213; these read VPDRAPDSRPEE and RMVE…KGSQ. Over residues 238–264 the composition is skewed to low complexity; the sequence is GVLEGAVVAGEGQGELEGSLLLAQEAQ. Phosphoserine is present on Ser-272.

Interacts with SMAD1, SMAD5 and RUNX2. In terms of tissue distribution, expressed in brain microglia (at protein level). Detected in urine (at protein level). Elevated expression levels seen in the brain of patients with Alzheimer disease. Expressed by osteoblast-like cells in bone tissues and follicular dendritic cells in lymphoid tissues.

The protein localises to the cell membrane. The protein resides in the cytoplasm. It is found in the endoplasmic reticulum membrane. Its subcellular location is the secreted. In terms of biological role, plays an important role in bone formation and normal bone mineralization. Promotes the differentiation of myoblasts into osteoblasts. May induce the commitment and differentiation of myoblasts into osteoblasts through an enhancement of BMP2 production and interaction with the BMP-RUNX2 pathway. Up-regulates the expression of ATF4, a transcription factor which plays a central role in osteoblast differentiation. Essential for normal spermatogenesis and late testicular differentiation. This chain is Transmembrane protein 119 (TMEM119), found in Homo sapiens (Human).